Consider the following 434-residue polypeptide: 3-isopropylmalate dehydratase large subunit 1 (434 aa).

3 residues coordinate [4Fe-4S] cluster: Cys308, Cys368, and Cys371.

It belongs to the aconitase/IPM isomerase family. LeuC type 2 subfamily. Heterodimer of LeuC and LeuD. It depends on [4Fe-4S] cluster as a cofactor.

It carries out the reaction (2R,3S)-3-isopropylmalate = (2S)-2-isopropylmalate. It functions in the pathway amino-acid biosynthesis; L-leucine biosynthesis; L-leucine from 3-methyl-2-oxobutanoate: step 2/4. Catalyzes the isomerization between 2-isopropylmalate and 3-isopropylmalate, via the formation of 2-isopropylmaleate. This is 3-isopropylmalate dehydratase large subunit 1 from Deinococcus radiodurans (strain ATCC 13939 / DSM 20539 / JCM 16871 / CCUG 27074 / LMG 4051 / NBRC 15346 / NCIMB 9279 / VKM B-1422 / R1).